The sequence spans 246 residues: Carboxy-S-adenosyl-L-methionine synthase (246 aa).

S-adenosyl-L-methionine is bound by residues Tyr-39, 64-66, 89-90, 117-118, Asn-132, and Arg-199; these read GCS, DN, and DI.

Belongs to the class I-like SAM-binding methyltransferase superfamily. Cx-SAM synthase family. In terms of assembly, homodimer.

The catalysed reaction is prephenate + S-adenosyl-L-methionine = carboxy-S-adenosyl-L-methionine + 3-phenylpyruvate + H2O. Functionally, catalyzes the conversion of S-adenosyl-L-methionine (SAM) to carboxy-S-adenosyl-L-methionine (Cx-SAM). The protein is Carboxy-S-adenosyl-L-methionine synthase of Erwinia tasmaniensis (strain DSM 17950 / CFBP 7177 / CIP 109463 / NCPPB 4357 / Et1/99).